We begin with the raw amino-acid sequence, 224 residues long: 2,5-diamino-6-ribosylamino-4(3H)-pyrimidinone 5'-phosphate reductase (224 aa).

Residues G16, T57, D61, 83 to 86, V134, and 156 to 159 each bind NADP(+); these read SKLR and GGTL.

Belongs to the HTP reductase family. As to quaternary structure, homodimer.

The catalysed reaction is 2,5-diamino-6-(1-D-ribitylamino)pyrimidin-4(3H)-one 5'-phosphate + NADP(+) = 2,5-diamino-6-(1-D-ribosylamino)pyrimidin-4(3H)-one 5'-phosphate + NADPH + H(+). The enzyme catalyses 2,5-diamino-6-(1-D-ribitylamino)pyrimidin-4(3H)-one 5'-phosphate + NAD(+) = 2,5-diamino-6-(1-D-ribosylamino)pyrimidin-4(3H)-one 5'-phosphate + NADH + H(+). It participates in cofactor biosynthesis; riboflavin biosynthesis. In terms of biological role, catalyzes an early step in riboflavin biosynthesis, the NAD(P)H-dependent reduction of the ribose side chain of 2,5-diamino-6-ribosylamino-4(3H)-pyrimidinone 5'-phosphate, yielding 2,5-diamino-6-ribitylamino-4(3H)-pyrimidinone 5'-phosphate. The beta anomer is the authentic substrate, and the alpha anomer can serve as substrate subsequent to spontaneous anomerization. NADPH and NADH function equally well as the reductants. Does not catalyze the reduction of 5-amino-6-(5-phospho-D-ribosylamino)uracil to 5-amino-6-(5-phospho-D-ribitylamino)uracil. This chain is 2,5-diamino-6-ribosylamino-4(3H)-pyrimidinone 5'-phosphate reductase (arfC), found in Methanocaldococcus jannaschii (strain ATCC 43067 / DSM 2661 / JAL-1 / JCM 10045 / NBRC 100440) (Methanococcus jannaschii).